A 326-amino-acid chain; its full sequence is 3-methyl-2-oxobutanoate hydroxymethyltransferase 1 (326 aa).

The Mg(2+) site is built by Asp52, Asp91, and Glu122. Residues 52–53 (DS) and Asp91 each bind 3-methyl-2-oxobutanoate. The active-site Proton acceptor is Glu189.

This sequence belongs to the PanB family. In terms of assembly, homodecamer; pentamer of dimers. It depends on Mg(2+) as a cofactor.

The protein resides in the cytoplasm. It carries out the reaction 3-methyl-2-oxobutanoate + (6R)-5,10-methylene-5,6,7,8-tetrahydrofolate + H2O = 2-dehydropantoate + (6S)-5,6,7,8-tetrahydrofolate. Its pathway is cofactor biosynthesis; (R)-pantothenate biosynthesis; (R)-pantoate from 3-methyl-2-oxobutanoate: step 1/2. Its function is as follows. Catalyzes the reversible reaction in which hydroxymethyl group from 5,10-methylenetetrahydrofolate is transferred onto alpha-ketoisovalerate to form ketopantoate. This chain is 3-methyl-2-oxobutanoate hydroxymethyltransferase 1, found in Bradyrhizobium diazoefficiens (strain JCM 10833 / BCRC 13528 / IAM 13628 / NBRC 14792 / USDA 110).